A 121-amino-acid polypeptide reads, in one-letter code: Pro-glucagon (121 aa).

The N-terminal stretch at 1–21 (MKGAQYLAGLLLLLFVQNSIC) is a signal peptide. Residues 80–85 (SNGGSA) constitute a propeptide that is removed on maturation.

It belongs to the glucagon family.

The protein localises to the secreted. Plays a key role in glucose metabolism and homeostasis. Regulates blood glucose by increasing gluconeogenesis and decreasing glycolysis. The polypeptide is Pro-glucagon (gcg) (Carassius auratus (Goldfish)).